We begin with the raw amino-acid sequence, 165 residues long: uncharacterized protein (165 aa).

A disordered region spans residues 51–102; the sequence is KQAAVEPGARGGERPTGSQAGVTDTPDSAPFQRRSRAPRAREQAAQAGLNQK. Polar residues predominate over residues 66-76; sequence TGSQAGVTDTP.

This is an uncharacterized protein from Mus musculus (Mouse).